The following is a 380-amino-acid chain: Apolipoprotein A-IV (380 aa).

A signal peptide spans 1–20 (MFLKAVVLSLALVAVTGAEA). A run of 13 repeats spans residues 33 to 54 (DYFSQLGNNAKKAVEHIQKSEL), 60 to 81 (TLFQDKLGEVSTYTDDLQKKLV), 82 to 103 (PFATELHERLTKDSEKLKEEIR), 115 to 136 (PHATEVSQKIGDNVRELQQRLG), 137 to 158 (PYAEELRTQVDTQAQQLRRQLT), 159 to 180 (PYVERMEKVMRQNLDQLQASLA), 181 to 202 (PYAEELQATVNQRVEELKGRLT), 203 to 224 (PYADQLQTKIEENVEELRRSLA), 225 to 246 (PYAQDVQGKLNHQLEGLAFQMK), 247 to 268 (KHAEELKAKISAKAEELRQGLV), 269 to 286 (PLVNSVHGSQLGNAEDLQ), 287 to 308 (KSLAELSSRLDQQVEDFRRTVG), and 309 to 330 (PYGETFNKAMVQQLDTLRQKLG). The segment at 33–330 (DYFSQLGNNA…QLDTLRQKLG (298 aa)) is 13 X 22 AA approximate tandem repeats. A disordered region spans residues 361-380 (KESQAPALPAQEEMPVPLGG).

This sequence belongs to the apolipoprotein A1/A4/E family. In terms of assembly, homodimer. Secreted in plasma.

The protein localises to the secreted. Its function is as follows. May have a role in chylomicrons and VLDL secretion and catabolism. Required for efficient activation of lipoprotein lipase by ApoC-II; potent activator of LCAT. Apoa-IV is a major component of HDL and chylomicrons. The polypeptide is Apolipoprotein A-IV (APOA4) (Bos taurus (Bovine)).